We begin with the raw amino-acid sequence, 347 residues long: Dehydratase asqC (347 aa).

Residues 1-18 (MRPAILAAFSTLPAAAKA) form the signal peptide. 7 N-linked (GlcNAc...) asparagine glycosylation sites follow: Asn51, Asn103, Asn131, Asn143, Asn215, Asn264, and Asn281.

The catalysed reaction is [(1'E)-5'-(3',3'-dimethyloxiran-2'-yl)-3'-hydroxy-3'-methylpent-1'-en-1'-yl]-quinolinone B = (1'E,3'E)-5-(3,3-dimethyloxiran-2-yl)-3-methylhexa-1,3-dienyl-quinolinone B + H2O. The protein operates within secondary metabolite biosynthesis. It functions in the pathway alkaloid biosynthesis. It participates in mycotoxin biosynthesis. In terms of biological role, dehydratase; part of the gene cluster that mediates the biosynthesis of the aspoquinolone mycotoxins. Within the pathway, the dehydratase asqC catalyzes the dehydratation of the epoxide at C-3 to produce (1'E,3'E)-5-(3,3-dimethyloxiran-2-yl)-3-methylhexa-1,3-dienyl-quinolinone B. The first step of the pathway is catalyzed by the nonribosomal peptide synthetase asqK that condenses anthranilic acid and O-methyl-L-tyrosine to produce 4'-methoxycyclopeptin. 4'-methoxycyclopeptin is then converted to 4'-methoxydehydrocyclopeptin by the ketoglutarate-dependent dioxygenase asqJ. AsqJ also converts its first product 4'-methoxydehydrocyclopeptin to 4'-methoxycyclopenin. The following conversion of 4'-methoxycyclopenin into 4'-methoxyviridicatin is catalyzed by the cyclopenase asqI. 4'-methoxyviridicatin is the precursor of quinolone natural products, and is further converted to quinolinone B. The prenyltransferase asqH1 then catalyzes the canonical Friedel-Crafts alkylation of quinolinone B with dimethylallyl cation to yield dimethylallyl quinolone, which is subjected to FAD-dependent dehydrogenation by the FAD-linked oxidoreductase asqF to yield conjugated aryl diene. The delta(3') double bond then serves as the site of the second alkylation with DMAPP catalyzed by the prenyltransferase asqH2 to yield a carbenium ion intermediate, which can be attacked by H(2)O to yield a styrenyl quinolone containing a C3'-hydroxyprenyl chain. The FAD-dependent monooxygenase asqG performs epoxidation of the terminal C7'-C8' olefin. Finally, after dehydratation of the epoxide at C3 by asqC, the quinolone epoxide rearrangement protein asqO catalyzes an enzymatic 3-exo-tet cyclization to yield the cyclopropyl-THF ring system in aspoquinolone. The protein is Dehydratase asqC of Emericella nidulans (strain FGSC A4 / ATCC 38163 / CBS 112.46 / NRRL 194 / M139) (Aspergillus nidulans).